The sequence spans 141 residues: VLSANDKTNVKNVFTKITGHAEDYGAETLERMFTTYPPTKTYFPHFDLHHGSAQIKAHGKKVVGALIEAVNHIDDIAGALSKLSDLHAQKLRVDPVNFKLLGQCFLVVVAIHHPSVLTPEVHASLDKFLCAVGNVLTAKYR.

The Globin domain maps to 1-141; sequence VLSANDKTNV…VGNVLTAKYR (141 aa). Histidine 58 contributes to the O2 binding site. Histidine 87 provides a ligand contact to heme b.

Belongs to the globin family. Heterotetramer of two alpha chains and two beta chains. In terms of tissue distribution, red blood cells.

Functionally, involved in oxygen transport from the lung to the various peripheral tissues. The protein is Hemoglobin subunit alpha-A/A' (HBAA) of Gyps rueppelli (Rueppell's griffon).